The sequence spans 348 residues: Ion-translocating oxidoreductase complex subunit D (348 aa).

Helical transmembrane passes span 20 to 39, 67 to 87, and 124 to 144; these read VMRLTLLALVPGIAAQCYLF, YVVSASLKDSSALLTAALIAV, and AMVGYVLLLVSFPAPMTNWMA. Residue threonine 187 is modified to FMN phosphoryl threonine. Transmembrane regions (helical) follow at residues 221-241, 244-264, 266-286, and 300-320; these read WINLSFLAGGILLFMLRLIPW, PVAMLGTLAAASALAHYLAPA, FAMPEIELLSGATMLGAFFII, and LVFGALVGGLVFIIRHFGGYP.

Belongs to the NqrB/RnfD family. As to quaternary structure, the complex is composed of six subunits: RnfA, RnfB, RnfC, RnfD, RnfE and RnfG. Requires FMN as cofactor.

It localises to the cell inner membrane. Part of a membrane-bound complex that couples electron transfer with translocation of ions across the membrane. This chain is Ion-translocating oxidoreductase complex subunit D, found in Tolumonas auensis (strain DSM 9187 / NBRC 110442 / TA 4).